The following is a 181-amino-acid chain: Adenylate kinase (181 aa).

Residue 10–15 (GAGKGT) coordinates ATP. Positions 30–59 (STGELFRKNIQDGTKLGIEAKRYLDAGDLV) are NMP. Residues Thr-31, Arg-36, 57–59 (DLV), 85–88 (GYPR), and Gln-92 contribute to the AMP site. The interval 126–132 (GRGRADD) is LID. Residue Arg-127 coordinates ATP. AMP contacts are provided by Arg-129 and Arg-140. Gly-166 contributes to the ATP binding site.

It belongs to the adenylate kinase family. In terms of assembly, monomer.

It is found in the cytoplasm. The catalysed reaction is AMP + ATP = 2 ADP. Its pathway is purine metabolism; AMP biosynthesis via salvage pathway; AMP from ADP: step 1/1. Catalyzes the reversible transfer of the terminal phosphate group between ATP and AMP. Plays an important role in cellular energy homeostasis and in adenine nucleotide metabolism. The sequence is that of Adenylate kinase from Mycobacterium marinum (strain ATCC BAA-535 / M).